The chain runs to 231 residues: Homeobox protein EMX1 (231 aa).

Residues 133-192 (PKRIRTAFSPSQLLRLERAFEKNHYVVGAERKQLANSLSLSETQVKVWFQNRRTKYKRQK) constitute a DNA-binding region (homeobox). Residues 193 to 231 (LEEEGPECTQKKKGNHHINRWRIATKQTGSEDIDVMSDA) are disordered. Over residues 203-212 (KKKGNHHINR) the composition is skewed to basic residues.

Belongs to the EMX homeobox family.

The protein localises to the nucleus. In terms of biological role, may function in combinations with OTX1/2 to specify cell fates in the developing central nervous system. The sequence is that of Homeobox protein EMX1 (emx1) from Danio rerio (Zebrafish).